We begin with the raw amino-acid sequence, 450 residues long: Phosphoglucosamine mutase 2 (450 aa).

The active-site Phosphoserine intermediate is S101. S101, D245, D247, and D249 together coordinate Mg(2+). S101 carries the phosphoserine modification.

Belongs to the phosphohexose mutase family. Requires Mg(2+) as cofactor. Post-translationally, activated by phosphorylation.

The catalysed reaction is alpha-D-glucosamine 1-phosphate = D-glucosamine 6-phosphate. Its function is as follows. Catalyzes the conversion of glucosamine-6-phosphate to glucosamine-1-phosphate. This is Phosphoglucosamine mutase 2 from Shewanella baltica (strain OS185).